A 179-amino-acid chain; its full sequence is MAVFKTTLWRLISGTLGIICLSLMATLGILLKNSFTKLSIEPAFTPGPNIELQKDSDCCSCQEKWVGYRCNCYFISSEQKTWNESRHLCASQKSSLLQLQNTDELDFMSSSQQFYWIGLSYSEEHTAWLWENGSALSQYLFPSFETFNPKNCIAYNPNGNALDESCEDKNRYICKQQLI.

Residues 1 to 10 lie on the Cytoplasmic side of the membrane; that stretch reads MAVFKTTLWR. A helical; Signal-anchor for type II membrane protein membrane pass occupies residues 11 to 31; the sequence is LISGTLGIICLSLMATLGILL. Residues 32 to 179 are Extracellular-facing; it reads KNSFTKLSIE…NRYICKQQLI (148 aa). Cystine bridges form between Cys-58–Cys-70 and Cys-61–Cys-72. Residues 68-175 form the C-type lectin domain; the sequence is YRCNCYFISS…CEDKNRYICK (108 aa). 2 N-linked (GlcNAc...) asparagine glycosylation sites follow: Asn-83 and Asn-132. 2 cysteine pairs are disulfide-bonded: Cys-89-Cys-174 and Cys-152-Cys-166.

As to quaternary structure, can form disulfide-bonded heterodimer with NKG2 family members KLRC1 and KLRC2. KLRD1-KLRC1 heterodimer interacts with peptide-bound MHC-E-B2M heterotrimeric complex. KLRD1 plays a prominent role in directly interacting with MHC-E. KLRD1-KLRC1 interacts with much higher affinity with peptide-bound MHC-E-B2M than KLRD1-KLRC2. Interacts with the adapter protein TYROBP/DAP12; this interaction is required for cell surface expression and cell activation. Natural killer cells.

It is found in the cell membrane. Its function is as follows. Immune receptor involved in self-nonself discrimination. In complex with KLRC1 or KLRC2 on cytotoxic and regulatory lymphocyte subsets, recognizes non-classical major histocompatibility (MHC) class Ib molecule MHC-E loaded with self-peptides derived from the signal sequence of classical MHC class Ia and non-classical MHC class Ib molecules. Enables cytotoxic cells to monitor the expression of MHC class I molecules in healthy cells and to tolerate self. Primarily functions as a ligand binding subunit as it lacks the capacity to signal. In terms of biological role, KLRD1-KLRC1 acts as an immune inhibitory receptor. Key inhibitory receptor on natural killer (NK) cells that regulates their activation and effector functions. Dominantly counteracts T cell receptor signaling on a subset of memory/effector CD8-positive T cells as part of an antigen-driven response to avoid autoimmunity. On intraepithelial CD8-positive gamma-delta regulatory T cells triggers TGFB1 secretion, which in turn limits the cytotoxic programming of intraepithelial CD8-positive alpha-beta T cells, distinguishing harmless from pathogenic antigens. In MHC-E-rich tumor microenvironment, acts as an immune inhibitory checkpoint and may contribute to progressive loss of effector functions of NK cells and tumor-specific T cells, a state known as cell exhaustion. Upon MHC-E-peptide binding, transmits intracellular signals through KLRC1 immunoreceptor tyrosine-based inhibition motifs (ITIMs) by recruiting INPP5D/SHIP-1 and INPPL1/SHIP-2 tyrosine phosphatases to ITIMs, and ultimately opposing signals transmitted by activating receptors through dephosphorylation of proximal signaling molecules. KLRD1-KLRC2 acts as an immune activating receptor. On cytotoxic lymphocyte subsets recognizes MHC-E loaded with signal sequence-derived peptides from non-classical MHC class Ib MHC-G molecules, likely playing a role in the generation and effector functions of adaptive NK cells and in maternal-fetal tolerance during pregnancy. Regulates the effector functions of terminally differentiated cytotoxic lymphocyte subsets, and in particular may play a role in adaptive NK cell response to viral infection. Upon MHC-E-peptide binding, transmits intracellular signals via the adapter protein TYROBP/DAP12, triggering the phosphorylation of proximal signaling molecules and cell activation. This chain is Natural killer cells antigen CD94 (KLRD1), found in Pan troglodytes (Chimpanzee).